We begin with the raw amino-acid sequence, 151 residues long: UPAR/Ly6 domain-containing protein crok (151 aa).

The first 23 residues, 1–23 (MKTLEKYILFAIVLCCLLQLGQA), serve as a signal peptide directing secretion. At 24-128 (IKCWDCRSDN…KDGCNSAGIH (105 aa)) the chain is on the lumenal side. 5 disulfide bridges follow: Cys26–Cys68, Cys29–Cys37, Cys51–Cys85, Cys100–Cys114, and Cys116–Cys122. An N-linked (GlcNAc...) asparagine glycan is attached at Asn43. Ser124 carries GPI-anchor amidated serine lipidation. A propeptide spans 125-151 (AGIHRLGLMGVLTGTLLSVIVAHLLRQ) (removed in mature form). A helical membrane pass occupies residues 129–149 (RLGLMGVLTGTLLSVIVAHLL). The Cytoplasmic portion of the chain corresponds to 150–151 (RQ).

It belongs to the quiver family.

It localises to the vesicle. It is found in the membrane. The protein resides in the endomembrane system. Its function is as follows. Required for septate junction assembly, possibly by organizing the preassembly and transport of septate junction proteins including dlg1/disks large 1 and Nrx-IV/Neurexin-IV. Involved in paracellular barrier functions of trachea, hindgut and salivary gland mediated by epithelial cell septate junctions. The sequence is that of UPAR/Ly6 domain-containing protein crok from Drosophila melanogaster (Fruit fly).